The following is a 792-amino-acid chain: 5-methyltetrahydropteroyltriglutamate--homocysteine methyltransferase (792 aa).

5-methyltetrahydropteroyltri-L-glutamate-binding positions include 16 to 19 (RELK) and Lys112. L-homocysteine is bound by residues 432–434 (IGS) and Glu485. L-methionine-binding positions include 432–434 (IGS) and Glu485. Residues 516-517 (RC) and Trp562 each bind 5-methyltetrahydropteroyltri-L-glutamate. Asp600 serves as a coordination point for L-homocysteine. Asp600 is an L-methionine binding site. Glu606 lines the 5-methyltetrahydropteroyltri-L-glutamate pocket. Zn(2+)-binding residues include His642, Cys644, and Glu666. The active-site Proton donor is His695. Cys727 is a Zn(2+) binding site.

Belongs to the vitamin-B12 independent methionine synthase family. Zn(2+) is required as a cofactor.

The catalysed reaction is 5-methyltetrahydropteroyltri-L-glutamate + L-homocysteine = tetrahydropteroyltri-L-glutamate + L-methionine. Its pathway is amino-acid biosynthesis; L-methionine biosynthesis via de novo pathway; L-methionine from L-homocysteine (MetE route): step 1/1. Functionally, catalyzes the transfer of a methyl group from 5-methyltetrahydrofolate to homocysteine resulting in methionine formation. In Cupriavidus necator (Alcaligenes eutrophus), this protein is 5-methyltetrahydropteroyltriglutamate--homocysteine methyltransferase.